A 61-amino-acid polypeptide reads, in one-letter code: MARKALIEKWKKEPKYSTRAYTRCKICGRPHSVLKKYGICRICFRELAYKGEIPGCRKASW.

Zn(2+) contacts are provided by C24, C27, C40, and C43.

It belongs to the universal ribosomal protein uS14 family. Zinc-binding uS14 subfamily. As to quaternary structure, part of the 30S ribosomal subunit. Contacts proteins S3 and S10. Requires Zn(2+) as cofactor.

In terms of biological role, binds 16S rRNA, required for the assembly of 30S particles and may also be responsible for determining the conformation of the 16S rRNA at the A site. This chain is Small ribosomal subunit protein uS14, found in Clostridium acetobutylicum (strain ATCC 824 / DSM 792 / JCM 1419 / IAM 19013 / LMG 5710 / NBRC 13948 / NRRL B-527 / VKM B-1787 / 2291 / W).